A 102-amino-acid chain; its full sequence is MYAVVKTGGKQYKVSVGEKLKVEQIPAELDSQIELTEVLMIADGESVKVGAPFIEGAKVTAKVVAHGRGEKVRIFKMRRRKHYQKRQGHRQNFTQIEIVAIA.

This sequence belongs to the bacterial ribosomal protein bL21 family. In terms of assembly, part of the 50S ribosomal subunit. Contacts protein L20.

Functionally, this protein binds to 23S rRNA in the presence of protein L20. The protein is Large ribosomal subunit protein bL21 of Neisseria meningitidis serogroup A / serotype 4A (strain DSM 15465 / Z2491).